We begin with the raw amino-acid sequence, 486 residues long: Pup--protein ligase (486 aa).

Mg(2+) is bound at residue Glu33. Arg76 is a binding site for ATP. Residue Tyr78 coordinates Mg(2+). The Proton acceptor role is filled by Asp80. Position 86 (Glu86) interacts with Mg(2+). Thr89 and Trp451 together coordinate ATP.

Belongs to the Pup ligase/Pup deamidase family. Pup-conjugating enzyme subfamily.

It catalyses the reaction ATP + [prokaryotic ubiquitin-like protein]-L-glutamate + [protein]-L-lysine = ADP + phosphate + N(6)-([prokaryotic ubiquitin-like protein]-gamma-L-glutamyl)-[protein]-L-lysine.. The protein operates within protein degradation; proteasomal Pup-dependent pathway. Its pathway is protein modification; protein pupylation. Catalyzes the covalent attachment of the prokaryotic ubiquitin-like protein modifier Pup to the proteasomal substrate proteins, thereby targeting them for proteasomal degradation. This tagging system is termed pupylation. The ligation reaction involves the side-chain carboxylate of the C-terminal glutamate of Pup and the side-chain amino group of a substrate lysine. The chain is Pup--protein ligase from Bifidobacterium longum (strain DJO10A).